Consider the following 248-residue polypeptide: Mannose-binding protein C (248 aa).

An N-terminal signal peptide occupies residues 1–20 (MSLFPSLPLLLLSMVAASYS). The Collagen-like domain occupies 42–99 (GINGFPGKDGRDGTKGEKGEPGQGLRGLQGPPGKLGPPGNPGPSGSPGAKGQKGDPGA). A disordered region spans residues 43 to 112 (INGFPGKDGR…CDSSLANPER (70 aa)). Position 47 is a 4-hydroxyproline (Pro47). Positions 49–61 (KDGRDGTKGEKGE) are enriched in basic and acidic residues. 4-hydroxyproline occurs at positions 73, 79, 82, and 88. Residues 112–130 (RKTLQTEINRIKKWVTFSL) are a coiled coil. A C-type lectin domain is found at 134–245 (VGKKLFLTNG…CSSSHLVICE (112 aa)). Cystine bridges form between Cys155–Cys244 and Cys222–Cys236.

Oligomeric complex of 3 or more homotrimers. Interacts with MASP1 and MASP2. Interacts with MEP1A and MEP1B and may inhibit their catalytic activity. Post-translationally, hydroxylation on proline residues within the sequence motif, GXPG, is most likely to be 4-hydroxy as this fits the requirement for 4-hydroxylation in vertebrates.

The protein resides in the secreted. Its function is as follows. Calcium-dependent lectin involved in innate immune defense. Binds mannose, fucose and N-acetylglucosamine on different microorganisms and activates the lectin complement pathway. Binds to late apoptotic cells, as well as to apoptotic blebs and to necrotic cells, but not to early apoptotic cells, facilitating their uptake by macrophages. The protein is Mannose-binding protein C (MBL2) of Callithrix jacchus (White-tufted-ear marmoset).